Consider the following 436-residue polypeptide: MRLQHLADFKPQAATRAWASIPNPNGLPLIATATSDKSVRVYSLNNFTLHSTLEGGHERSVRSAAWKPGVRTDGALTIATGSFDATMGIWRRKEDAGNGNGNDGGDGPLEMEIGADGEVSKGAQLRRGGEEDEDEGDDWEFSIVLEGHDSEIKNVAYSPSGQWLASCSRDKTIWIWEEIGEEGEDEFETVAVLQDHKADVKCVCWRKDDGNGEVLASGSYDDTILLSREDGEGDWETVATLEGHEGTVWNLDWEPEVSMKTESSDESSAPATPRLLSSSADMSIRIWSKVPTPPPQNKPSYFNPGIPSTMRPGPENETWECTATLPKVHDLPIYSISWSKQTGRVVSTGGDGKIAIYEEQTKGRNSVGGTIEKEWVVLTVLEGAHGPYEINHVTWCQRFDNGKKTPDEEMVITTGDDGLTKAWCIEENVEERTLEA.

WD repeat units follow at residues 10-52 (KPQA…LHST) and 56-100 (GHER…GNGN). Disordered regions lie at residues 94–113 (EDAGNGNGNDGGDGPLEMEI) and 118–137 (EVSKGAQLRRGGEEDEDEGD). Positions 98–107 (NGNGNDGGDG) are enriched in gly residues. 5 WD repeats span residues 147-186 (GHDSEIKNVAYSPSGQWLASCSRDKTIWIWEEIGEEGEDE), 195-237 (DHKA…DWET), 243-297 (GHEG…PPQN), 328-367 (VHDLPIYSISWSKQTGRVVSTGGDGKIAIYEEQTKGRNSV), and 389-433 (EINH…EERT). The disordered stretch occupies residues 295 to 316 (PQNKPSYFNPGIPSTMRPGPEN).

The protein belongs to the WD repeat CIA1 family.

Essential component of the cytosolic iron-sulfur (Fe/S) protein assembly machinery. Required for the maturation of extramitochondrial Fe/S proteins. The protein is Probable cytosolic iron-sulfur protein assembly protein 1 (cia1) of Botryotinia fuckeliana (strain B05.10) (Noble rot fungus).